The primary structure comprises 150 residues: Large ribosomal subunit protein bL9 (150 aa).

The protein belongs to the bacterial ribosomal protein bL9 family.

Its function is as follows. Binds to the 23S rRNA. The protein is Large ribosomal subunit protein bL9 of Baumannia cicadellinicola subsp. Homalodisca coagulata.